Consider the following 179-residue polypeptide: Large ribosomal subunit protein uL5 (179 aa).

This sequence belongs to the universal ribosomal protein uL5 family. In terms of assembly, part of the 50S ribosomal subunit; part of the 5S rRNA/L5/L18/L25 subcomplex. Contacts the 5S rRNA and the P site tRNA. Forms a bridge to the 30S subunit in the 70S ribosome.

Functionally, this is one of the proteins that bind and probably mediate the attachment of the 5S RNA into the large ribosomal subunit, where it forms part of the central protuberance. In the 70S ribosome it contacts protein S13 of the 30S subunit (bridge B1b), connecting the 2 subunits; this bridge is implicated in subunit movement. Contacts the P site tRNA; the 5S rRNA and some of its associated proteins might help stabilize positioning of ribosome-bound tRNAs. This chain is Large ribosomal subunit protein uL5, found in Pelobacter propionicus (strain DSM 2379 / NBRC 103807 / OttBd1).